We begin with the raw amino-acid sequence, 142 residues long: Large ribosomal subunit protein uL13 (142 aa).

This sequence belongs to the universal ribosomal protein uL13 family. As to quaternary structure, part of the 50S ribosomal subunit.

Its function is as follows. This protein is one of the early assembly proteins of the 50S ribosomal subunit, although it is not seen to bind rRNA by itself. It is important during the early stages of 50S assembly. The polypeptide is Large ribosomal subunit protein uL13 (Acholeplasma laidlawii (strain PG-8A)).